Consider the following 320-residue polypeptide: Pyrroline-5-carboxylate reductase 2 (320 aa).

S2 carries the post-translational modification N-acetylserine. Residues 6-11 (IGAGQL) and S34 each bind NADP(+). Positions 8, 10, 11, 34, 36, 56, 70, 71, and 97 each coordinate NADPH. NADP(+) is bound by residues N56, 69 to 72 (AVKP), and 95 to 97 (CAA). E164 contributes to the L-proline binding site. N230 is a binding site for NADPH. Residues A237 and T238 each coordinate L-proline. Over residues 296 to 305 (TVSTLTPSSP) the composition is skewed to low complexity. The tract at residues 296 to 320 (TVSTLTPSSPGKLLTRSLALGGKKD) is disordered. At S304 the chain carries Phosphoserine.

This sequence belongs to the pyrroline-5-carboxylate reductase family. In terms of assembly, homodecamer; composed of 5 homodimers. Interacts with LTO1.

Its subcellular location is the cytoplasm. It localises to the mitochondrion. It carries out the reaction L-proline + NADP(+) = (S)-1-pyrroline-5-carboxylate + NADPH + 2 H(+). The enzyme catalyses L-proline + NAD(+) = (S)-1-pyrroline-5-carboxylate + NADH + 2 H(+). It functions in the pathway amino-acid biosynthesis; L-proline biosynthesis; L-proline from L-glutamate 5-semialdehyde: step 1/1. In terms of biological role, oxidoreductase that catalyzes the last step in proline biosynthesis, which corresponds to the reduction of pyrroline-5-carboxylate to L-proline using NAD(P)H. At physiologic concentrations, has higher specific activity in the presence of NADH. Involved in cellular response to oxidative stress. In some cell types, such as erythrocytes, its primary function may be the generation of NADP(+). This Pongo abelii (Sumatran orangutan) protein is Pyrroline-5-carboxylate reductase 2 (PYCR2).